We begin with the raw amino-acid sequence, 210 residues long: NADH dehydrogenase [ubiquinone] iron-sulfur protein 8, mitochondrial (210 aa).

The transit peptide at 1–34 (MRCLTTPMLLRALAQAARAGPPCGRSLHSSAVAA) directs the protein to the mitochondrion. 2 consecutive 4Fe-4S ferredoxin-type domains span residues 102–131 (RRYPSGEERCIACKLCEAICPAQAITIEAE) and 141–170 (TRYDIDMTKCIYCGFCQEACPVDAIVEGPN). Cys111, Cys114, Cys117, Cys121, Cys150, Cys153, Cys156, and Cys160 together coordinate [4Fe-4S] cluster.

Belongs to the complex I 23 kDa subunit family. As to quaternary structure, core subunit of respiratory chain NADH dehydrogenase (Complex I) which is composed of 45 different subunits. This is a component of the iron-sulfur (IP) fragment of the enzyme. Interacts with RAB5IF. Requires [4Fe-4S] cluster as cofactor.

It is found in the mitochondrion inner membrane. It carries out the reaction a ubiquinone + NADH + 5 H(+)(in) = a ubiquinol + NAD(+) + 4 H(+)(out). In terms of biological role, core subunit of the mitochondrial membrane respiratory chain NADH dehydrogenase (Complex I) which catalyzes electron transfer from NADH through the respiratory chain, using ubiquinone as an electron acceptor. Essential for the catalytic activity and assembly of complex I. This is NADH dehydrogenase [ubiquinone] iron-sulfur protein 8, mitochondrial (NDUFS8) from Pongo abelii (Sumatran orangutan).